The sequence spans 256 residues: Phosphonates import ATP-binding protein PhnC (256 aa).

The ABC transporter domain occupies 7-251 (IEMKNVTKVY…VFDNIYNGGK (245 aa)). ATP is bound at residue 40–47 (GLSGAGKS).

It belongs to the ABC transporter superfamily. Phosphonates importer (TC 3.A.1.9.1) family. As to quaternary structure, the complex is composed of two ATP-binding proteins (PhnC), two transmembrane proteins (PhnE) and a solute-binding protein (PhnD).

It is found in the cell membrane. The enzyme catalyses phosphonate(out) + ATP + H2O = phosphonate(in) + ADP + phosphate + H(+). Its function is as follows. Part of the ABC transporter complex PhnCDE involved in phosphonates import. Responsible for energy coupling to the transport system. The protein is Phosphonates import ATP-binding protein PhnC of Lactobacillus delbrueckii subsp. bulgaricus (strain ATCC 11842 / DSM 20081 / BCRC 10696 / JCM 1002 / NBRC 13953 / NCIMB 11778 / NCTC 12712 / WDCM 00102 / Lb 14).